The following is a 428-amino-acid chain: RF4 protein (428 aa).

N8, N205, and N344 each carry an N-linked (GlcNAc...) asparagine glycan.

Not known. This is RF4 protein (RF4) from Kluyveromyces lactis (strain ATCC 8585 / CBS 2359 / DSM 70799 / NBRC 1267 / NRRL Y-1140 / WM37) (Yeast).